Here is a 244-residue protein sequence, read N- to C-terminus: Isoprenyl transferase (244 aa).

Residue D20 is part of the active site. Position 20 (D20) interacts with Mg(2+). Substrate contacts are provided by residues 21 to 24 (GNGR), W25, R33, H37, and 65 to 67 (SSE). The active-site Proton acceptor is N68. Substrate contacts are provided by residues W69, R71, R188, and 194–196 (RIS). Residue E207 coordinates Mg(2+).

The protein belongs to the UPP synthase family. In terms of assembly, homodimer. Requires Mg(2+) as cofactor.

In terms of biological role, catalyzes the condensation of isopentenyl diphosphate (IPP) with allylic pyrophosphates generating different type of terpenoids. This chain is Isoprenyl transferase, found in Rhodopirellula baltica (strain DSM 10527 / NCIMB 13988 / SH1).